A 612-amino-acid chain; its full sequence is UvrABC system protein C (612 aa).

Residues 21 to 99 form the GIY-YIG domain; sequence HQPGVYRMYD…IKKYRPRYNV (79 aa). The region spanning 208–243 is the UVR domain; that stretch reads QQVIDELMNKMEQASTDLDFERAARFRDQIAALRKT.

It belongs to the UvrC family. Interacts with UvrB in an incision complex.

It is found in the cytoplasm. The UvrABC repair system catalyzes the recognition and processing of DNA lesions. UvrC both incises the 5' and 3' sides of the lesion. The N-terminal half is responsible for the 3' incision and the C-terminal half is responsible for the 5' incision. The sequence is that of UvrABC system protein C from Idiomarina loihiensis (strain ATCC BAA-735 / DSM 15497 / L2-TR).